Reading from the N-terminus, the 136-residue chain is NLP effector protein 13 (136 aa).

The Conserved undecapeptide motif I motif lies at 1–9; that stretch reads MYSWYFPKD. Residues 16 to 22 carry the Hepta-peptide GHRHDWE motif II motif; that stretch reads GHRHDWE.

The protein belongs to the Necrosis inducing protein (NPP1) family.

Its subcellular location is the secreted. Its function is as follows. Secreted effector that contributes moderately to virulence during infection by P.capsici. Causes only small yellow areas at 3 days after inoculation of host C.annuum leaves; these areas expand somewhat and became necrotic at 7 days after inoculation. Leads only to chlorotic areas, without necrosis at 7 days after non-host N.benthamiana leaves infection. The protein is NLP effector protein 13 of Phytophthora capsici.